The primary structure comprises 376 residues: Polar flagellin A (376 aa).

Coiled-coil stretches lie at residues S103–E128 and F310–T338.

This sequence belongs to the bacterial flagellin family. As to quaternary structure, heteromer of multiple flagellin subunits including FlaA, FlaB/D, FlaC, FlaE and FlaF.

It localises to the secreted. The protein localises to the bacterial flagellum. Its function is as follows. Flagellin is the subunit protein which polymerizes to form the filaments of bacterial flagella. FlaA is not essential for polar flagellar synthesis and swimming motility. Homomer of FlaA is able to form a functional filament. The protein is Polar flagellin A (flaA) of Vibrio parahaemolyticus serotype O3:K6 (strain RIMD 2210633).